The following is a 1087-amino-acid chain: Band 4.1-like protein 3 (1087 aa).

At Met-1 the chain carries N-acetylmethionine. The interval 1-43 is disordered; that stretch reads MTTESGSDSESKPDQEAEPQEAAGAQGRAGAPVPEPPKEEQQQ. Thr-2 carries the N-acetylthreonine; in Band 4.1-like protein 3, N-terminally processed modification. Low complexity predominate over residues 20–32; the sequence is QEAAGAQGRAGAP. At Ser-88 the chain carries Phosphoserine. Residues 110–391 form the FERM domain; it reads MQCKVILLDG…EHHTFFRLLL (282 aa). Residues 394–513 form a hydrophilic region; that stretch reads APPKKFLTLG…PGLGTDSCPL (120 aa). Residues Ser-420, Ser-443, and Ser-460 each carry the phosphoserine modification. Residues 459–469 are compositionally biased toward polar residues; sequence ISQTNLITTVT. Disordered regions lie at residues 459-529, 541-563, 675-715, and 937-965; these read ISQT…TELR, GYEP…GPGR, SASL…EDAE, and SETL…SPGG. Thr-469 and Thr-492 each carry phosphothreonine. Positions 514 to 860 are spectrin--actin-binding; sequence SPPSTHCAPT…VVQETVLVEE (347 aa). The span at 516-526 shows a compositional bias: polar residues; the sequence is PSTHCAPTSPT. Positions 681-691 are enriched in acidic residues; sequence DPSDSSEEETD. A compositionally biased stretch (low complexity) spans 698-707; sequence AADGETTATE. Phosphothreonine is present on Thr-706. Phosphoserine occurs at positions 708, 960, and 962. The tract at residues 861 to 1083 is C-terminal (CTD); it reads RRVVHASGDA…VHKETEITPE (223 aa). Positions 947 to 960 are enriched in polar residues; it reads ESSTVKTETISFGS. Thr-1081 is subject to Phosphothreonine.

As to quaternary structure, interacts (via FERM domain) with CADM1. Interacts (via FERM domain) with PRMT3; the interaction is direct and inhibits the protein-arginine N-methyltransferase activity of PRMT3. Interacts with PRMT5. Interacts with PRMT6. In terms of tissue distribution, expressed at high levels in brain, with lower levels in kidney, intestine, and testis. Detected in lung.

Its subcellular location is the cytoplasm. The protein resides in the cytoskeleton. It is found in the cell junction. It localises to the cell membrane. Functionally, tumor suppressor that inhibits cell proliferation and promotes apoptosis. Modulates the activity of protein arginine N-methyltransferases, including PRMT3 and PRMT5. In Homo sapiens (Human), this protein is Band 4.1-like protein 3.